The primary structure comprises 222 residues: Methionine import system permease protein MetP (222 aa).

The ABC transmembrane type-1 domain maps to threonine 18–glycine 212. 5 consecutive transmembrane segments (helical) span residues threonine 25–leucine 45, phenylalanine 73–glycine 93, alanine 97–leucine 117, isoleucine 152–isoleucine 172, and phenylalanine 195–isoleucine 215.

The protein belongs to the binding-protein-dependent transport system permease family. CysTW subfamily. In terms of assembly, the complex is composed of two ATP-binding proteins (MetN), two transmembrane proteins (MetP) and a solute-binding protein (MetQ).

It localises to the cell membrane. Its function is as follows. Part of the ABC transporter complex MetNPQ involved in methionine import. Responsible for the translocation of the substrate across the membrane. It has also been shown to be involved in methionine sulfoxide transport. This Bacillus subtilis (strain 168) protein is Methionine import system permease protein MetP (metP).